The following is a 686-amino-acid chain: Leucine-rich repeat-containing protein 49 (686 aa).

LRR repeat units lie at residues 113 to 134 (HLRL…SNLQ), 135 to 156 (RLIF…STLK), 157 to 178 (SLRV…ENLK), 179 to 200 (NLDV…NHLC), 201 to 222 (DLRV…NGLD), 223 to 244 (SLTE…DNLP), and 245 to 266 (CLQR…SCLA). The region spanning 279-317 (NPIAQESWYKHTVLQNMMQLRQLDMKRITEEERRVASVV) is the LRRCT domain. Disordered regions lie at residues 311–332 (RRVA…HKQS) and 359–381 (ASTQ…DGGN). A coiled-coil region spans residues 319–341 (KKEEEKKRESHKQSLLKEKKRLT).

Part of the neuronal tubulin polyglutamylase complex which contains TPGS1, TPGS2, TTLL1, LRRC49 and NICN1. Interacts with PCM1; TTLL1, TPGS1, TPGS2 and LRRC49.

It is found in the cytoplasm. The protein resides in the cytoskeleton. It localises to the microtubule organizing center. The protein localises to the centrosome. Its subcellular location is the centriolar satellite. Subunit of the tubulin polyglutamylase complex (TPGC). The complex mediates cilia and flagella polyglutamylation which is essential for their biogenesis and motility. This chain is Leucine-rich repeat-containing protein 49 (Lrrc49), found in Mus musculus (Mouse).